Here is a 652-residue protein sequence, read N- to C-terminus: DNA mismatch repair protein MutL (652 aa).

This sequence belongs to the DNA mismatch repair MutL/HexB family.

This protein is involved in the repair of mismatches in DNA. It is required for dam-dependent methyl-directed DNA mismatch repair. May act as a 'molecular matchmaker', a protein that promotes the formation of a stable complex between two or more DNA-binding proteins in an ATP-dependent manner without itself being part of a final effector complex. The protein is DNA mismatch repair protein MutL of Neorickettsia sennetsu (strain ATCC VR-367 / Miyayama) (Ehrlichia sennetsu).